The following is a 1479-amino-acid chain: C-type mannose receptor 2 (1479 aa).

Positions 1-30 (MGPGRPAPAPWPRHLLRCVLLLGCLHLGRP) are cleaved as a signal peptide. Topologically, residues 31–1414 (GAPGDAALPE…PSALPENPAA (1384 aa)) are extracellular. Positions 41 to 167 (PNVFLIFSHG…WRIYGSEEDL (127 aa)) constitute a Ricin B-type lectin domain. Cysteines 54 and 68 form a disulfide. A glycan (N-linked (GlcNAc...) (complex) asparagine) is linked at N69. C93 and C112 are disulfide-bonded. An N-linked (GlcNAc...) asparagine glycan is attached at N140. One can recognise a Fibronectin type-II domain in the interval 182–230 (SHGKPCTIPFKYDNQWFHGCTSTGREDGHLWCATTQDYGKDERWGFCPI). 4 disulfides stabilise this stretch: C187/C213, C201/C228, C266/C359, and C335/C351. Residues 244–360 (LTDSCYQFNF…CSIALPYVCK (117 aa)) enclose the C-type lectin 1 domain. N364 is a glycosylation site (N-linked (GlcNAc...) asparagine). C-type lectin domains lie at 389-505 (FQGH…SICK), 528-644 (HSPS…RYIC), 678-809 (KLRY…WICK), and 832-951 (FQEA…YICK). 2 cysteine pairs are disulfide-bonded: C410–C504 and C481–C496. The N-linked (GlcNAc...) asparagine glycan is linked to N588. Cystine bridges form between C618–C635, C704–C808, C785–C800, C853–C950, and C927–C942. N-linked (GlcNAc...) asparagine glycosylation is found at N954 and N1029. C-type lectin domains lie at 979-1107 (FLNK…GFIC), 1132-1243 (YLNG…GAVC), and 1273-1393 (FREH…GVVC). A disulfide bridge connects residues C1078 and C1098. A Glycyl lysine isopeptide (Lys-Gly) (interchain with G-Cter in SUMO1) cross-link involves residue K1142. C1220 and C1234 are disulfide-bonded. The N-linked (GlcNAc...) asparagine glycan is linked to N1350. C1369 and C1384 form a disulfide bridge. The chain crosses the membrane as a helical span at residues 1415–1435 (LVVVLMAVLLLLALLTAALIL). At 1436–1479 (YRRRQSIERGAFEGARYSRSSSSPTEATEKNILVSDMEMNEQQE) the chain is on the cytoplasmic side. The tract at residues 1450 to 1479 (ARYSRSSSSPTEATEKNILVSDMEMNEQQE) is disordered.

Interacts with C-terminal region of type I collagen/COL1A1. Interacts directly with PLAUR/UPAR and PLAU/pro-UPA to form a tri-molecular complex. Interacts with collagen V. In terms of processing, N-glycosylated. In terms of tissue distribution, ubiquitous with low expression in brain, placenta, lung, kidney, pancreas, spleen, thymus and colon. Expressed in endothelial cells, fibroblasts and macrophages. Highly expressed in fetal lung and kidney.

The protein localises to the membrane. In terms of biological role, may play a role as endocytotic lectin receptor displaying calcium-dependent lectin activity. Internalizes glycosylated ligands from the extracellular space for release in an endosomal compartment via clathrin-mediated endocytosis. May be involved in plasminogen activation system controlling the extracellular level of PLAUR/PLAU, and thus may regulate protease activity at the cell surface. May contribute to cellular uptake, remodeling and degradation of extracellular collagen matrices. May play a role during cancer progression as well as in other chronic tissue destructive diseases acting on collagen turnover. May participate in remodeling of extracellular matrix cooperating with the matrix metalloproteinases (MMPs). In Homo sapiens (Human), this protein is C-type mannose receptor 2 (MRC2).